The chain runs to 290 residues: UPF0750 membrane protein YdeO (290 aa).

The next 5 helical transmembrane spans lie at 18 to 38 (IIMV…VLIP), 56 to 76 (LFNL…VWLG), 83 to 103 (SFAL…SFFH), 112 to 132 (DTLL…GLAL), and 165 to 185 (LFVF…LSVI).

This sequence belongs to the UPF0750 family.

The protein localises to the cell membrane. The protein is UPF0750 membrane protein YdeO (ydeO) of Bacillus subtilis (strain 168).